We begin with the raw amino-acid sequence, 409 residues long: Arginine deiminase (409 aa).

The Amidino-cysteine intermediate role is filled by Cys399.

This sequence belongs to the arginine deiminase family.

It is found in the cytoplasm. It carries out the reaction L-arginine + H2O = L-citrulline + NH4(+). It functions in the pathway amino-acid degradation; L-arginine degradation via ADI pathway; carbamoyl phosphate from L-arginine: step 1/2. The sequence is that of Arginine deiminase from Streptococcus pneumoniae (strain JJA).